The chain runs to 498 residues: Probable dipeptidase B (498 aa).

Cys26 is a catalytic residue.

It belongs to the peptidase C69 family.

It carries out the reaction an L-aminoacyl-L-amino acid + H2O = 2 an L-alpha-amino acid. This is Probable dipeptidase B (pepDB) from Streptococcus pyogenes serotype M1.